A 586-amino-acid polypeptide reads, in one-letter code: Asparagine synthetase, nodule [glutamine-hydrolyzing] (586 aa).

Cysteine 2 acts as the For GATase activity in catalysis. One can recognise a Glutamine amidotransferase type-2 domain in the interval cysteine 2–arginine 185. L-glutamine-binding positions include arginine 50–valine 54, asparagine 75–glutamate 77, and aspartate 98. The 325-residue stretch at proline 193 to proline 517 folds into the Asparagine synthetase domain. Residues leucine 232, valine 268, and serine 342–glycine 343 contribute to the ATP site.

Root nodules.

The catalysed reaction is L-aspartate + L-glutamine + ATP + H2O = L-asparagine + L-glutamate + AMP + diphosphate + H(+). It participates in amino-acid biosynthesis; L-asparagine biosynthesis; L-asparagine from L-aspartate (L-Gln route): step 1/1. This is Asparagine synthetase, nodule [glutamine-hydrolyzing] (AS1) from Pisum sativum (Garden pea).